The primary structure comprises 271 residues: Troponin T, fast skeletal muscle (271 aa).

Residues 1-21 (MSDEEVEHVEEEYEEEEEAQE) show a composition bias toward acidic residues. Positions 1–74 (MSDEEVEHVE…EKVDFDDIQK (74 aa)) are disordered. Ser2 carries the N-acetylserine modification. Ser2 bears the Phosphoserine mark. Basic and acidic residues-rich tracts occupy residues 29–53 (EVHEVHEEVHEVHEPEEVQEEEKPR) and 62–74 (PEGEKVDFDDIQK). Residue Ser90 is modified to Phosphoserine. Basic and acidic residues predominate over residues 113 to 155 (RAERAEQQRIRAEKERERQNRLAEEKARREEEEAKRRAEDDLK). Residues 113–192 (RAERAEQQRI…TAREMKKKVL (80 aa)) are disordered. Phosphoserine is present on residues Ser161, Ser168, and Ser169. Over residues 183–192 (TAREMKKKVL) the composition is skewed to basic and acidic residues. Ser205 carries the post-translational modification Phosphoserine. Phosphotyrosine is present on Tyr221. The interval 249–271 (DQAQKHSKKAGTTPKGKVGGRWK) is disordered.

The protein belongs to the troponin T family.

Troponin T is the tropomyosin-binding subunit of troponin, the thin filament regulatory complex which confers calcium-sensitivity to striated muscle actomyosin ATPase activity. This chain is Troponin T, fast skeletal muscle (TNNT3), found in Sus scrofa (Pig).